A 622-amino-acid chain; its full sequence is Chaperone protein HscA homolog (622 aa).

The protein belongs to the heat shock protein 70 family.

In terms of biological role, chaperone involved in the maturation of iron-sulfur cluster-containing proteins. Has a low intrinsic ATPase activity which is markedly stimulated by HscB. This is Chaperone protein HscA homolog from Burkholderia pseudomallei (strain K96243).